The chain runs to 360 residues: Decorin (360 aa).

Residues 1-16 (MKATIIFFLVAQVSWA) form the signal peptide. The propeptide occupies 17–30 (GPFQQKGLFDFMLE). Residue Ser-34 is glycosylated (O-linked (Xyl...) (glycosaminoglycan) serine). 2 disulfide bridges follow: Cys-55–Cys-61 and Cys-59–Cys-68. LRR repeat units lie at residues 74–94 (EKVP…NNKI), 95–118 (TEIK…NNKI), 119–142 (SKIS…KNQL), 143–163 (KELP…ENEI), 164–187 (TKVR…TNPL), 188–213 (KSSG…DTNI), 214–234 (TTIP…GNKI), 235–258 (TKVD…FNSI), 259–282 (SAVD…NNKL), 283–305 (VKVP…NNNI), 306–335 (SAIG…SNPV), and 336–360 (QYWE…GNYK). A glycan (N-linked (GlcNAc...) asparagine) is linked at Asn-212. Asn-263 and Asn-304 each carry an N-linked (GlcNAc...) asparagine glycan. Cys-314 and Cys-347 are disulfide-bonded.

This sequence belongs to the small leucine-rich proteoglycan (SLRP) family. SLRP class I subfamily. As to quaternary structure, binds to type I and type II collagen, fibronectin and TGF-beta. Forms a ternary complex with MFAP2 and ELN. Interacts with DPT. Post-translationally, the attached glycosaminoglycan chain can be either chondroitin sulfate or dermatan sulfate depending upon the tissue of origin.

Its subcellular location is the secreted. It localises to the extracellular space. The protein resides in the extracellular matrix. May affect the rate of fibrils formation. The polypeptide is Decorin (DCN) (Ovis aries (Sheep)).